The following is a 334-amino-acid chain: MTKVVVCALYKFVSLPHFESIRAPLLAMMEQAEIKGTLLLASEGINGTVAGTQEAIEALLVWLNGQNGLDNIVHKLSFDDEMPFYRTKVKLKNEIVTMGVEGIDPLKVVGTYVKPQDWNALISDPDVILVDTRNDYEVQIGTFKNAVNPVTETFREFPEYVKQNLDPAKHKKVAMFCTGGIRCEKSTAYLKEQGFDEVYHLEGGILKYLEEVKAEESLWEGECFVFDNRVAVNHDLKKGQYDQCNACRMPITEVEKQSPAYVQGVSCPHCIDKISDEQRKRFVERERQVNLAKARNEAHIGSDVNQVIEARREKKEAQRRLAAEKNNAKKSQVL.

One can recognise a Rhodanese domain in the interval 123–217 (SDPDVILVDT…YLEEVKAEES (95 aa)). The Cysteine persulfide intermediate role is filled by Cys-177.

This sequence belongs to the TrhO family.

It catalyses the reaction uridine(34) in tRNA + AH2 + O2 = 5-hydroxyuridine(34) in tRNA + A + H2O. Catalyzes oxygen-dependent 5-hydroxyuridine (ho5U) modification at position 34 in tRNAs. The sequence is that of tRNA uridine(34) hydroxylase from Shewanella baltica (strain OS223).